The chain runs to 458 residues: Smoothelin-like protein 2 (458 aa).

A coiled-coil region spans residues 24–88 (LEGAVRALHE…RQVESLGLTT (65 aa)). Disordered regions lie at residues 87–111 (TTGL…RAPR), 123–142 (FSLS…SELE), and 151–312 (IIEN…GAQA). Residues 94-104 (PGTPSPPPAPG) are compositionally biased toward pro residues. Position 96 is a phosphothreonine (Thr-96). Residues Ser-98, Ser-126, and Ser-131 each carry the phosphoserine modification. Residues 131–142 (SLDHHDEASELE) are compositionally biased toward basic and acidic residues. 2 stretches are compositionally biased toward low complexity: residues 158-167 (PGADPGDGPP) and 209-220 (TSATALSPTSAA). Residues 225–244 (LSSSPSEATTPWTPSPSEKN) show a composition bias toward polar residues. Residues 245–254 (SSLPRSLSSS) are compositionally biased toward low complexity. Phosphoserine is present on residues Ser-252, Ser-254, and Ser-267. The span at 270–283 (LVTPPQSPPSPQPP) shows a compositional bias: pro residues. Residue Thr-272 is modified to Phosphothreonine. Residue Ser-276 is modified to Phosphoserine. The span at 290–299 (RPGERRRELV) shows a compositional bias: basic and acidic residues. The span at 300 to 310 (RSQTLPRTSGA) shows a compositional bias: polar residues. Ser-341 is modified (phosphoserine). The Calponin-homology (CH) domain occupies 348 to 455 (SSIKQILLEW…YVQSLYNHLR (108 aa)).

The protein belongs to the smoothelin family.

This Bos taurus (Bovine) protein is Smoothelin-like protein 2 (SMTNL2).